An 814-amino-acid polypeptide reads, in one-letter code: MKVHETRSHAHMSGDEQKGNLRKHKAEGKLPESEQSQKKAKPENDDGRSVNGAGDAASEYNEFCKAVEENLSIDQIKEVLEINGQDCSAPEETLLAQCQDLLFYGALAKCPLCGGTLICDNEKRFVCGGEISEWCSCVFSTKDPPRKEEPVKIPDSVMNSAISDLIKKHQDPKSRPKRELGSADKPFVGMMISLMGRLTRTHQYWKKKIERNGGKVSNTVQGVTCLVVSPAERERGGTSKMVEAMEQGLPVVSEAWLIDSVEKHEAQPLEAYDVVSDLSVEGKGIPWDKQDPSEEAIESFSAELKMYGKRGVYMDTKLQERGGKIFEKDGLLYNCAFSICDLGKGRNEYCIMQLVTVPDSNLNMYFKRGKVGDDPNAEERLEEWEDEEAAIKEFARLFEEIAGNEFEPWEREKKIQKKPHKFFPIDMDDGIEVRSGALGLRQLGIASAHCKLDSFVANFIKVLCGQEIYNYALMELGLDPPDLPMGMLTDIHLKRCEEVLLEFVEKVKTTKETGQKAEAMWADFSSRWFSLMHSTRPMRLHDVNELADHAASAFETVRDINTASRLIGDMRGDTLDDPLSDRYKKLGCKISVVDKESEDYKMVVKYLETTYEPVKVSDVEYGVSVQNVFAVESDAIPSLDDIKKLPNKVLLWCGSRSSNLLRHIYKGFLPAVCSLPVPGYMFGRAIVCSDAAAEAARYGFTAVDRPEGFLVLAVASLGEEVTEFTSPPEDTKTLEDKKIGVKGLGRKKTEESEHFMWRDDIKVPCGRLVPSEHKDSPLEYNEYAVYDPKQTSIRFLVEVKYEEKGTEIVDVEPE.

Composition is skewed to basic and acidic residues over residues 1–19 and 27–48; these read MKVH…EQKG and EGKL…DDGR. The disordered stretch occupies residues 1-52; it reads MKVHETRSHAHMSGDEQKGNLRKHKAEGKLPESEQSQKKAKPENDDGRSVNG. A PADR1 zinc-binding domain is found at 38–186; that stretch reads KKAKPENDDG…KRELGSADKP (149 aa). The zinc ribbon stretch occupies residues 105–150; that stretch reads GALAKCPLCGGTLICDNEKRFVCGGEISEWCSCVFSTKDPPRKEEP. 4 residues coordinate Zn(2+): Cys110, Cys113, Cys127, and Cys137. TPR repeat units lie at residues 182-215 and 277-310; these read SADK…NGGK and DLSV…YGKR. Positions 187 to 274 constitute a BRCT domain; that stretch reads FVGMMISLMG…EAQPLEAYDV (88 aa). Residues 322 to 422 enclose the WGR domain; that stretch reads GGKIFEKDGL…KKIQKKPHKF (101 aa). In terms of domain architecture, PARP alpha-helical spans 449–568; sequence HCKLDSFVAN…DINTASRLIG (120 aa). The 232-residue stretch at 577–808 folds into the PARP catalytic domain; sequence DPLSDRYKKL…VKYEEKGTEI (232 aa).

The protein belongs to the ARTD/PARP family.

It localises to the nucleus. The catalysed reaction is L-aspartyl-[protein] + NAD(+) = 4-O-(ADP-D-ribosyl)-L-aspartyl-[protein] + nicotinamide. It carries out the reaction L-glutamyl-[protein] + NAD(+) = 5-O-(ADP-D-ribosyl)-L-glutamyl-[protein] + nicotinamide. Involved in the base excision repair (BER) pathway, by catalyzing the poly(ADP-ribosyl)ation of a limited number of acceptor proteins involved in chromatin architecture and in DNA metabolism. This modification follows DNA damages and appears as an obligatory step in a detection/signaling pathway leading to the reparation of DNA strand breaks. The chain is Protein ADP-ribosyltransferase PARP3 (PARP3) from Arabidopsis thaliana (Mouse-ear cress).